The chain runs to 415 residues: Maintenance of mitochondrial morphology protein 1 (415 aa).

Residues 1-18 (MADICPSRSEPTLSFTQG) are Lumenal-facing. A helical membrane pass occupies residues 19-39 (LILGQLSVVLLLAAFIKFFIF). Topologically, residues 40-415 (GDPPSPEVVA…MPGSMPGSMP (376 aa)) are cytoplasmic. The SMP-LTD domain occupies 114-330 (QPESLDWFNV…EPRFQEIALP (217 aa)). Positions 373–389 (IEAEAHGGADRVPDSLR) are enriched in basic and acidic residues. The tract at residues 373–415 (IEAEAHGGADRVPDSLRYRHRPRADEEFPGAGSMPGSMPGSMP) is disordered. Low complexity predominate over residues 404–415 (GSMPGSMPGSMP).

Belongs to the MMM1 family. As to quaternary structure, homodimer. Component of the ER-mitochondria encounter structure (ERMES) or MDM complex, composed of mmm-1, mdm10, mdm12 and mdm34. A mmm-1 homodimer associates with one molecule of mdm12 on each side in a pairwise head-to-tail manner, and the SMP-LTD domains of mmm-1 and mdm12 generate a continuous hydrophobic tunnel for phospholipid trafficking.

Its subcellular location is the endoplasmic reticulum membrane. In terms of biological role, component of the ERMES/MDM complex, which serves as a molecular tether to connect the endoplasmic reticulum (ER) and mitochondria. Components of this complex are involved in the control of mitochondrial shape and protein biogenesis, and function in nonvesicular lipid trafficking between the ER and mitochondria. The mdm12-mmm-1 subcomplex functions in the major beta-barrel assembly pathway that is responsible for biogenesis of all outer membrane beta-barrel proteins, and acts in a late step after the SAM complex. The mdm10-mdm12-mmm-1 subcomplex further acts in the TOM40-specific pathway after the action of the mdm12-mmm-1 complex. Essential for establishing and maintaining the structure of mitochondria and maintenance of mtDNA nucleoids. This Neurospora crassa (strain ATCC 24698 / 74-OR23-1A / CBS 708.71 / DSM 1257 / FGSC 987) protein is Maintenance of mitochondrial morphology protein 1 (mmm-1).